The chain runs to 564 residues: MPKVEIYKSILLEKIGKNLTNYELESIIETAKAEICEIDIVNDKIKIEFNDTNRPDLWSSAGLARHIKTYLSGNVPSFDFFSMTDNLQKFYGEIFVSPEVFGIRPFIFGFLAKGMICDERMLESLIQLQEKLSHNYGQKRKRIAMGMYSSNLIHFPINYVTCSSDYKFVPLGMDIEMSIKEINERHPKGIEYSSIFENVDQYSLLLDYKNNVLSYPPIINSRDIGTLKVGDTNLFIEVTGTDLEATLLSLSIVACDLYDMGFKILPVKTVFPRETLFGKEIICPYYFQNSLKINVDSVNKLLGSNFTANDMCLDLKKLGISAYFEESDTFYIMPPVYRNDFLHEVDVIEEVMIGKGLDNFKSELPKDFTIGKLSPIEEFSRSVRNLMIGMGFQEMIYNYLGSKVDFIEKMNIKGSELLSVSNPMTESYEYIRGSIIPDLLKSESISSNFPYPHKIFEIGKVALKDLVSDEGTVTYDNLAFLMADKEFSFNEINSLVSSLFYYLNIGFKVKESSKNLYIDGRGADILVNDIVLGCFGEVSPYILNNFGIMVPCCVLEININGLLN.

In terms of domain architecture, B5 spans 286 to 362; that stretch reads YFQNSLKINV…IGKGLDNFKS (77 aa). Residues D340, D346, E349, and E350 each contribute to the Mg(2+) site.

The protein belongs to the phenylalanyl-tRNA synthetase beta subunit family. Type 2 subfamily. Tetramer of two alpha and two beta subunits. Requires Mg(2+) as cofactor.

The protein resides in the cytoplasm. The enzyme catalyses tRNA(Phe) + L-phenylalanine + ATP = L-phenylalanyl-tRNA(Phe) + AMP + diphosphate + H(+). This chain is Phenylalanine--tRNA ligase beta subunit, found in Borrelia recurrentis (strain A1).